Reading from the N-terminus, the 431-residue chain is tRNA(Ile)-lysidine synthase (431 aa).

19–24 (STGIDS) contacts ATP.

Belongs to the tRNA(Ile)-lysidine synthase family.

The protein localises to the cytoplasm. It catalyses the reaction cytidine(34) in tRNA(Ile2) + L-lysine + ATP = lysidine(34) in tRNA(Ile2) + AMP + diphosphate + H(+). Functionally, ligates lysine onto the cytidine present at position 34 of the AUA codon-specific tRNA(Ile) that contains the anticodon CAU, in an ATP-dependent manner. Cytidine is converted to lysidine, thus changing the amino acid specificity of the tRNA from methionine to isoleucine. The chain is tRNA(Ile)-lysidine synthase from Staphylococcus aureus (strain MRSA252).